The following is an 89-amino-acid chain: DNA-directed RNA polymerase subunit omega (89 aa).

It belongs to the RNA polymerase subunit omega family. The RNAP catalytic core consists of 2 alpha, 1 beta, 1 beta' and 1 omega subunit. When a sigma factor is associated with the core the holoenzyme is formed, which can initiate transcription.

The catalysed reaction is RNA(n) + a ribonucleoside 5'-triphosphate = RNA(n+1) + diphosphate. In terms of biological role, promotes RNA polymerase assembly. Latches the N- and C-terminal regions of the beta' subunit thereby facilitating its interaction with the beta and alpha subunits. This chain is DNA-directed RNA polymerase subunit omega, found in Idiomarina loihiensis (strain ATCC BAA-735 / DSM 15497 / L2-TR).